Consider the following 506-residue polypeptide: Maturase K (506 aa).

It belongs to the intron maturase 2 family. MatK subfamily.

It localises to the plastid. It is found in the chloroplast. Its function is as follows. Usually encoded in the trnK tRNA gene intron. Probably assists in splicing its own and other chloroplast group II introns. This chain is Maturase K, found in Olea europaea (Common olive).